The following is a 260-amino-acid chain: Imidazole glycerol phosphate synthase subunit HisF (260 aa).

Catalysis depends on residues Asp-11 and Asp-130.

The protein belongs to the HisA/HisF family. Heterodimer of HisH and HisF.

It is found in the cytoplasm. It carries out the reaction 5-[(5-phospho-1-deoxy-D-ribulos-1-ylimino)methylamino]-1-(5-phospho-beta-D-ribosyl)imidazole-4-carboxamide + L-glutamine = D-erythro-1-(imidazol-4-yl)glycerol 3-phosphate + 5-amino-1-(5-phospho-beta-D-ribosyl)imidazole-4-carboxamide + L-glutamate + H(+). Its pathway is amino-acid biosynthesis; L-histidine biosynthesis; L-histidine from 5-phospho-alpha-D-ribose 1-diphosphate: step 5/9. IGPS catalyzes the conversion of PRFAR and glutamine to IGP, AICAR and glutamate. The HisF subunit catalyzes the cyclization activity that produces IGP and AICAR from PRFAR using the ammonia provided by the HisH subunit. This chain is Imidazole glycerol phosphate synthase subunit HisF, found in Caulobacter sp. (strain K31).